The chain runs to 121 residues: Amelogenin (121 aa).

Positions 1–121 (LHHQIIPVLS…DLPLEPWPAS (121 aa)) are disordered. Polar residues-rich tracts occupy residues 10–19 (SQHQTPTHAL) and 47–59 (HSVT…QSNL). Residues 60–84 (PQPGQQPFQPQFPQKPTHRPIQPQA) show a composition bias toward low complexity. Over residues 85–121 (PVHPMPPMPQPQLPPMFPLQPLPPLLPDLPLEPWPAS) the composition is skewed to pro residues.

This sequence belongs to the amelogenin family.

It localises to the secreted. The protein resides in the extracellular space. Its subcellular location is the extracellular matrix. Plays a role in the biomineralization of teeth. Seems to regulate the formation of crystallites during the secretory stage of tooth enamel development. Thought to play a major role in the structural organization and mineralization of developing enamel. The protein is Amelogenin (AMEL) of Tachyglossus aculeatus aculeatus (Southeast Australian short-beaked echidna).